The chain runs to 282 residues: HTH-type transcriptional activator RhaR (282 aa).

The region spanning 179–277 (DKLITALANS…GMTPSQWRHL (99 aa)) is the HTH araC/xylS-type domain. 2 consecutive DNA-binding regions (H-T-H motif) follow at residues 196-217 (DAFCQQEQCSERVLRQQFRAQT) and 244-267 (ISEISMQCGFEDSNYFSVVFTRET).

As to quaternary structure, binds DNA as a dimer.

It localises to the cytoplasm. Functionally, activates expression of the rhaSR operon in response to L-rhamnose. This is HTH-type transcriptional activator RhaR from Salmonella agona (strain SL483).